A 354-amino-acid polypeptide reads, in one-letter code: MNGTEGPNFYVPMSNKTGIVRSPFEYPQYYLAEPWKYSVLAAYMFLLILLGLPINFMTLYVTIQHKKLRTPLNYILLNLAFANHFMVLCGFTITMYTSLHGYFVFGQTGCYFEGFFATLGGEIALWSLVVLAIERYIVVCKPMSNFRFGENHAMMGVAFTWIMALACAVPPLFGWSRYIPEGMQCSCGVDYYTLKPEVNNESFVIYMFVVHFLIPLIIISFCYGRLVCTVKEAAAQQQESATTQKAEKEVTRMVVIMVIFFLICWVPYAYVAFYIFTHQGSEFGPIFMTVPAFFAKSSAIYNPVIYIMLNKQFRNCMITTLCCGKNPFGDEDASSAATSKTEATSVSTSQVSPA.

Over 1–36 the chain is Extracellular; sequence MNGTEGPNFYVPMSNKTGIVRSPFEYPQYYLAEPWK. Residues Asn-2 and Asn-15 are each glycosylated (N-linked (GlcNAc...) asparagine). Residues 37–61 traverse the membrane as a helical segment; the sequence is YSVLAAYMFLLILLGLPINFMTLYV. Residues 62-73 lie on the Cytoplasmic side of the membrane; it reads TIQHKKLRTPLN. The helical transmembrane segment at 74 to 96 threads the bilayer; the sequence is YILLNLAFANHFMVLCGFTITMY. The Extracellular segment spans residues 97–110; that stretch reads TSLHGYFVFGQTGC. An intrachain disulfide couples Cys-110 to Cys-187. The helical transmembrane segment at 111–133 threads the bilayer; the sequence is YFEGFFATLGGEIALWSLVVLAI. Residues 134-136 carry the 'Ionic lock' involved in activated form stabilization motif; sequence ERY. The Cytoplasmic portion of the chain corresponds to 134 to 152; that stretch reads ERYIVVCKPMSNFRFGENH. Residues 153-173 form a helical membrane-spanning segment; the sequence is AMMGVAFTWIMALACAVPPLF. At 174 to 202 the chain is on the extracellular side; the sequence is GWSRYIPEGMQCSCGVDYYTLKPEVNNES. The chain crosses the membrane as a helical span at residues 203–224; sequence FVIYMFVVHFLIPLIIISFCYG. The Cytoplasmic segment spans residues 225 to 252; sequence RLVCTVKEAAAQQQESATTQKAEKEVTR. The helical transmembrane segment at 253-274 threads the bilayer; it reads MVVIMVIFFLICWVPYAYVAFY. Over 275–286 the chain is Extracellular; sequence IFTHQGSEFGPI. The helical transmembrane segment at 287–308 threads the bilayer; the sequence is FMTVPAFFAKSSAIYNPVIYIM. Lys-296 carries the N6-(retinylidene)lysine modification. Over 309 to 354 the chain is Cytoplasmic; it reads LNKQFRNCMITTLCCGKNPFGDEDASSAATSKTEATSVSTSQVSPA. 2 S-palmitoyl cysteine lipidation sites follow: Cys-322 and Cys-323. The tract at residues 331–354 is disordered; that stretch reads EDASSAATSKTEATSVSTSQVSPA. Over residues 334–354 the composition is skewed to low complexity; sequence SSAATSKTEATSVSTSQVSPA.

This sequence belongs to the G-protein coupled receptor 1 family. Opsin subfamily. Post-translationally, contains one covalently linked retinal chromophore. Upon light absorption, the covalently bound 11-cis-retinal is converted to all-trans-retinal. After hydrolysis of the Schiff base and release of the covalently bound all-trans-retinal, active rhodopsin is regenerated by binding of a fresh molecule of 11-cis-retinal. As to expression, retina. Localized in the ventral part of the retina.

Its subcellular location is the membrane. It is found in the cell projection. The protein resides in the cilium. It localises to the photoreceptor outer segment. Its function is as follows. Photoreceptor required for image-forming vision at low light intensity. Required for photoreceptor cell viability after birth. May use a mixture of retinal and 3-dehydroretinal as visual pigment. Light-induced isomerization of 11-cis to all-trans retinal triggers a conformational change that activates signaling via G-proteins. Subsequent receptor phosphorylation mediates displacement of the bound G-protein alpha subunit by arrestin and terminates signaling. This chain is Rhodopsin (RHO), found in Aquarana catesbeiana (American bullfrog).